Reading from the N-terminus, the 75-residue chain is ATP synthase subunit c (75 aa).

Helical transmembrane passes span isoleucine 9–phenylalanine 29 and phenylalanine 54–alanine 74.

Belongs to the ATPase C chain family. In terms of assembly, F-type ATPases have 2 components, F(1) - the catalytic core - and F(0) - the membrane proton channel. F(1) has five subunits: alpha(3), beta(3), gamma(1), delta(1), epsilon(1). F(0) has three main subunits: a(1), b(2) and c(10-14). The alpha and beta chains form an alternating ring which encloses part of the gamma chain. F(1) is attached to F(0) by a central stalk formed by the gamma and epsilon chains, while a peripheral stalk is formed by the delta and b chains.

It localises to the cell inner membrane. F(1)F(0) ATP synthase produces ATP from ADP in the presence of a proton or sodium gradient. F-type ATPases consist of two structural domains, F(1) containing the extramembraneous catalytic core and F(0) containing the membrane proton channel, linked together by a central stalk and a peripheral stalk. During catalysis, ATP synthesis in the catalytic domain of F(1) is coupled via a rotary mechanism of the central stalk subunits to proton translocation. Functionally, key component of the F(0) channel; it plays a direct role in translocation across the membrane. A homomeric c-ring of between 10-14 subunits forms the central stalk rotor element with the F(1) delta and epsilon subunits. In Pelagibacter ubique (strain HTCC1062), this protein is ATP synthase subunit c.